The chain runs to 570 residues: Proline--tRNA ligase (570 aa).

It belongs to the class-II aminoacyl-tRNA synthetase family. ProS type 1 subfamily. Homodimer.

It is found in the cytoplasm. It carries out the reaction tRNA(Pro) + L-proline + ATP = L-prolyl-tRNA(Pro) + AMP + diphosphate. Its function is as follows. Catalyzes the attachment of proline to tRNA(Pro) in a two-step reaction: proline is first activated by ATP to form Pro-AMP and then transferred to the acceptor end of tRNA(Pro). As ProRS can inadvertently accommodate and process non-cognate amino acids such as alanine and cysteine, to avoid such errors it has two additional distinct editing activities against alanine. One activity is designated as 'pretransfer' editing and involves the tRNA(Pro)-independent hydrolysis of activated Ala-AMP. The other activity is designated 'posttransfer' editing and involves deacylation of mischarged Ala-tRNA(Pro). The misacylated Cys-tRNA(Pro) is not edited by ProRS. In Shewanella sp. (strain MR-7), this protein is Proline--tRNA ligase.